The following is a 246-amino-acid chain: MRSGVIARKVGMTRVFTDAGEHVPVTVLQIDQCQVVAHRTTEKDGYVALQVGVGKAKVKNVSQAERGRFAVAKVEPKKKLAEFRVSEDALIPVGAEITADHFIPGQFVDVTGTSTGKGFAGGMKRWNFGGLRATHGVSISHRSIGSTGGRQDPGKTFKNKKMPGHLGVERVTTQNLKVVRTDPERGLILVEGAVPGVAGGWIQVRDSVKRKLPADVPLPGKFRENGSAGASQIEAAPEAPASEENA.

Disordered regions lie at residues 140–162 (SHRS…NKKM) and 214–246 (ADVP…EENA). At Gln151 the chain carries N5-methylglutamine. Residues 234–246 (EAAPEAPASEENA) are compositionally biased toward low complexity.

Belongs to the universal ribosomal protein uL3 family. In terms of assembly, part of the 50S ribosomal subunit. Forms a cluster with proteins L14 and L19. Methylated by PrmB.

Its function is as follows. One of the primary rRNA binding proteins, it binds directly near the 3'-end of the 23S rRNA, where it nucleates assembly of the 50S subunit. In Methylorubrum extorquens (strain CM4 / NCIMB 13688) (Methylobacterium extorquens), this protein is Large ribosomal subunit protein uL3.